A 260-amino-acid polypeptide reads, in one-letter code: Acetyl-coenzyme A carboxylase carboxyl transferase subunit alpha (260 aa).

Positions 1–235 constitute a CoA carboxyltransferase C-terminal domain; sequence MSAYDKVMAA…SNKILHSINK (235 aa).

It belongs to the AccA family. In terms of assembly, acetyl-CoA carboxylase is a heterohexamer composed of biotin carboxyl carrier protein (AccB), biotin carboxylase (AccC) and two subunits each of ACCase subunit alpha (AccA) and ACCase subunit beta (AccD).

It is found in the cytoplasm. It catalyses the reaction N(6)-carboxybiotinyl-L-lysyl-[protein] + acetyl-CoA = N(6)-biotinyl-L-lysyl-[protein] + malonyl-CoA. It functions in the pathway lipid metabolism; malonyl-CoA biosynthesis; malonyl-CoA from acetyl-CoA: step 1/1. Its function is as follows. Component of the acetyl coenzyme A carboxylase (ACC) complex. First, biotin carboxylase catalyzes the carboxylation of biotin on its carrier protein (BCCP) and then the CO(2) group is transferred by the carboxyltransferase to acetyl-CoA to form malonyl-CoA. The protein is Acetyl-coenzyme A carboxylase carboxyl transferase subunit alpha of Ruminiclostridium cellulolyticum (strain ATCC 35319 / DSM 5812 / JCM 6584 / H10) (Clostridium cellulolyticum).